The sequence spans 529 residues: Peptide chain release factor 3 (529 aa).

The region spanning 11-280 (AKRRTFAIIS…GLVEWAPAPM (270 aa)) is the tr-type G domain. GTP contacts are provided by residues 20 to 27 (SHPDAGKT), 88 to 92 (DTPGH), and 142 to 145 (NKLD).

Belongs to the TRAFAC class translation factor GTPase superfamily. Classic translation factor GTPase family. PrfC subfamily.

The protein localises to the cytoplasm. Increases the formation of ribosomal termination complexes and stimulates activities of RF-1 and RF-2. It binds guanine nucleotides and has strong preference for UGA stop codons. It may interact directly with the ribosome. The stimulation of RF-1 and RF-2 is significantly reduced by GTP and GDP, but not by GMP. The polypeptide is Peptide chain release factor 3 (Citrobacter koseri (strain ATCC BAA-895 / CDC 4225-83 / SGSC4696)).